A 226-amino-acid chain; its full sequence is uncharacterized protein (226 aa).

This is an uncharacterized protein from Bacillus subtilis (strain 168).